The sequence spans 243 residues: Urease accessory protein UreF 2 (243 aa).

Belongs to the UreF family. As to quaternary structure, ureD, UreF and UreG form a complex that acts as a GTP-hydrolysis-dependent molecular chaperone, activating the urease apoprotein by helping to assemble the nickel containing metallocenter of UreC. The UreE protein probably delivers the nickel.

Its subcellular location is the cytoplasm. Functionally, required for maturation of urease via the functional incorporation of the urease nickel metallocenter. In Brucella suis (strain ATCC 23445 / NCTC 10510), this protein is Urease accessory protein UreF 2.